A 170-amino-acid polypeptide reads, in one-letter code: Adenine phosphoribosyltransferase (170 aa).

It belongs to the purine/pyrimidine phosphoribosyltransferase family. In terms of assembly, homodimer.

It localises to the cytoplasm. The enzyme catalyses AMP + diphosphate = 5-phospho-alpha-D-ribose 1-diphosphate + adenine. The protein operates within purine metabolism; AMP biosynthesis via salvage pathway; AMP from adenine: step 1/1. Functionally, catalyzes a salvage reaction resulting in the formation of AMP, that is energically less costly than de novo synthesis. The chain is Adenine phosphoribosyltransferase from Mesoplasma florum (strain ATCC 33453 / NBRC 100688 / NCTC 11704 / L1) (Acholeplasma florum).